The chain runs to 184 residues: UPF0149 protein PSPTO_5224 (184 aa).

It belongs to the UPF0149 family.

The protein is UPF0149 protein PSPTO_5224 of Pseudomonas syringae pv. tomato (strain ATCC BAA-871 / DC3000).